The sequence spans 7785 residues: Probable non-canonical nonribosomal peptide synthetase (NRPS) CymA (7785 aa).

3 consecutive Carrier domains span residues 487–562 (TARS…QRQE), 1908–1983 (HART…SEQQ), and 2958–3033 (SPGM…LEGG). 3 positions are modified to O-(pantetheine 4'-phosphoryl)serine: Ser-522, Ser-1943, and Ser-2993. An LRR 1 repeat occupies 3088–3111 (RLALADVVVRHEALRTVFAERAGN). Carrier domains are found at residues 3978–4053 (APRT…SEQQ), 5002–5077 (EPRT…LEAN), and 6389–6464 (GPRD…AQGS). O-(pantetheine 4'-phosphoryl)serine is present on residues Ser-4013, Ser-5037, and Ser-6424. The stretch at 6853 to 6875 (TGVSRVDLSVNAIETFDDHGLPA) is one LRR 2 repeat. In terms of domain architecture, Carrier 7 spans 7432–7507 (GPRTPQEEIL…QLAEQLGSDG (76 aa)). Ser-7467 is modified (O-(pantetheine 4'-phosphoryl)serine).

Pantetheine 4'-phosphate serves as cofactor.

Probable non-canonical nonribosomal peptide synthetase (NRPS); part of the gene cluster that mediates the biosynthesis of cyclic heptapeptides, known as cyclomarins and also of cyclic dipeptides, called cyclomarazines, which have both antimicrobial and cytotoxic effects. First, CymD catalyzes the reverse N-prenylation of monomeric L-tryptophan with dimethylallyl diphosphate (DMAPP) to form N-(1,1-dimethylallyl)-tryptophan (r-N-DMAT). The N-(1,1-dimethylallyl)-tryptophan produced by CymD is then combined with a range of standard and nonproteinogenic amino acid substrates to synthesize the peptides, a process that is probably catalyzed by the non-canonical nonribosomal peptide synthetase (NRPS), CymA. Other proteins in the cluster catalyze further modifications of the peptides including CymV which catalyzes the oxidation of olefinic cyclomarins and cyclomarazines to their respective epoxide derivatives. The polypeptide is Probable non-canonical nonribosomal peptide synthetase (NRPS) CymA (Salinispora arenicola (strain CNS-205)).